The following is a 127-amino-acid chain: Small ribosomal subunit protein uS13 (127 aa).

Residues 97 to 127 are disordered; sequence PVRGQRTKTNARTRKGPRKTVAGKKGVKDLR. A compositionally biased stretch (basic residues) spans 101–118; it reads QRTKTNARTRKGPRKTVA.

The protein belongs to the universal ribosomal protein uS13 family. Part of the 30S ribosomal subunit. Forms a loose heterodimer with protein S19. Forms two bridges to the 50S subunit in the 70S ribosome.

Functionally, located at the top of the head of the 30S subunit, it contacts several helices of the 16S rRNA. In the 70S ribosome it contacts the 23S rRNA (bridge B1a) and protein L5 of the 50S subunit (bridge B1b), connecting the 2 subunits; these bridges are implicated in subunit movement. Contacts the tRNAs in the A and P-sites. The sequence is that of Small ribosomal subunit protein uS13 from Rhodopirellula baltica (strain DSM 10527 / NCIMB 13988 / SH1).